The primary structure comprises 257 residues: Zinc transporter ZupT (257 aa).

Transmembrane regions (helical) follow at residues 5–25 (LILT…GVLG), 32–52 (LLAF…LMEM), and 61–81 (GMSP…YFGL). Asparagine 120 and glutamate 123 together coordinate Fe(2+). Zn(2+) contacts are provided by glutamate 123 and histidine 148. The next 4 helical transmembrane spans lie at 137–157 (LGFG…LAVA), 171–191 (ILWA…AWLI), 195–215 (MISP…MVAL), and 236–256 (GVLC…TAGI). Residues asparagine 149, glutamate 152, and glutamate 181 each contribute to the Fe(2+) site. Zn(2+) is bound at residue glutamate 152.

It belongs to the ZIP transporter (TC 2.A.5) family. ZupT subfamily.

The protein localises to the cell inner membrane. It carries out the reaction Zn(2+)(in) = Zn(2+)(out). In terms of biological role, mediates zinc uptake. May also transport other divalent cations. The protein is Zinc transporter ZupT of Escherichia coli O7:K1 (strain IAI39 / ExPEC).